A 335-amino-acid chain; its full sequence is Anthranilate phosphoribosyltransferase (335 aa).

Residues glycine 79, 82-83 (GD), threonine 87, 89-92 (NIST), 107-115 (KHGSRSVSS), and serine 119 contribute to the 5-phospho-alpha-D-ribose 1-diphosphate site. Position 79 (glycine 79) interacts with anthranilate. Serine 91 provides a ligand contact to Mg(2+). Arginine 165 contributes to the anthranilate binding site. 2 residues coordinate Mg(2+): aspartate 223 and glutamate 224.

The protein belongs to the anthranilate phosphoribosyltransferase family. Homodimer. Mg(2+) is required as a cofactor.

It carries out the reaction N-(5-phospho-beta-D-ribosyl)anthranilate + diphosphate = 5-phospho-alpha-D-ribose 1-diphosphate + anthranilate. It participates in amino-acid biosynthesis; L-tryptophan biosynthesis; L-tryptophan from chorismate: step 2/5. Its function is as follows. Catalyzes the transfer of the phosphoribosyl group of 5-phosphorylribose-1-pyrophosphate (PRPP) to anthranilate to yield N-(5'-phosphoribosyl)-anthranilate (PRA). The sequence is that of Anthranilate phosphoribosyltransferase from Helicobacter pylori (strain Shi470).